The chain runs to 165 residues: Nucleotide-binding protein Chy400_2003 (165 aa).

This sequence belongs to the YajQ family.

In terms of biological role, nucleotide-binding protein. The chain is Nucleotide-binding protein Chy400_2003 from Chloroflexus aurantiacus (strain ATCC 29364 / DSM 637 / Y-400-fl).